A 356-amino-acid polypeptide reads, in one-letter code: D-alanine--D-alanine ligase (356 aa).

In terms of domain architecture, ATP-grasp spans 134-339 (KQLFAHRGLP…YADLITKLIE (206 aa)). 167–222 (KDKLEFPVFVKPANLGSSVGISKCNNEEELKSGIEEAFQFDRKLVIEQGIEAREIE) serves as a coordination point for ATP. Asp293, Glu306, and Asn308 together coordinate Mg(2+).

It belongs to the D-alanine--D-alanine ligase family. Requires Mg(2+) as cofactor. It depends on Mn(2+) as a cofactor.

It localises to the cytoplasm. The catalysed reaction is 2 D-alanine + ATP = D-alanyl-D-alanine + ADP + phosphate + H(+). The protein operates within cell wall biogenesis; peptidoglycan biosynthesis. Its function is as follows. Cell wall formation. The sequence is that of D-alanine--D-alanine ligase from Staphylococcus carnosus (strain TM300).